A 135-amino-acid chain; its full sequence is uncharacterized protein (135 aa).

This is an uncharacterized protein from Saccharomyces cerevisiae (strain ATCC 204508 / S288c) (Baker's yeast).